Consider the following 182-residue polypeptide: T-cell surface glycoprotein CD3 gamma chain (182 aa).

A signal peptide spans 1–22; it reads MEQGKGLAVLILAIILLQGTLA. The Extracellular segment spans residues 23–116; that stretch reads QSIKGNHLVK…CIELNAATIS (94 aa). Positions 37-94 constitute an Ig-like domain; it reads QEDGSVLLTCDAEAKNITWFKDGKMIGFLTEDKKKWNLGSNAKDPRGMYQCKGSQNKS. Residues cysteine 46 and cysteine 87 are joined by a disulfide bond. Asparagine 52 and asparagine 92 each carry an N-linked (GlcNAc...) asparagine glycan. The chain crosses the membrane as a helical span at residues 117–137; it reads GFLFAEIVSIFVLAVGVYFIA. Residues 138-182 are Cytoplasmic-facing; the sequence is GQDGVRQSRASDKQTLLPNDQLYQPLKDREDDQYSHLQGNQLRRN. Serine 145 is subject to Phosphoserine. Residue serine 148 is modified to Phosphoserine; by PKC. Positions 149–177 constitute an ITAM domain; it reads DKQTLLPNDQLYQPLKDREDDQYSHLQGN. The Di-leucine motif signature appears at 153-154; that stretch reads LL.

In terms of assembly, the TCR-CD3 complex is composed of a CD3D/CD3E and a CD3G/CD3E heterodimers that preferentially associate with TCRalpha and TCRbeta, respectively, to form TCRalpha/CD3E/CD3G and TCRbeta/CD3G/CD3E trimers. In turn, the hexamer interacts with CD3Z homodimer to form the TCR-CD3 complex. Alternatively, TCRalpha and TCRbeta can be replaced by TCRgamma and TCRdelta. In terms of processing, phosphorylated on Tyr residues after T-cell receptor triggering by LCK in association with CD4/CD8. Phosphorylated also by PKC; leading to the TCR complex down-regulation. Phosphorylated on Tyr residues after T-cell receptor triggering by LCK in association with CD4/CD8.

It localises to the cell membrane. Functionally, part of the TCR-CD3 complex present on T-lymphocyte cell surface that plays an essential role in adaptive immune response. When antigen presenting cells (APCs) activate T-cell receptor (TCR), TCR-mediated signals are transmitted across the cell membrane by the CD3 chains CD3D, CD3E, CD3G and CD3Z. All CD3 chains contain immunoreceptor tyrosine-based activation motifs (ITAMs) in their cytoplasmic domain. Upon TCR engagement, these motifs become phosphorylated by Src family protein tyrosine kinases LCK and FYN, resulting in the activation of downstream signaling pathways. In addition to this role of signal transduction in T-cell activation, CD3G plays an essential role in the dynamic regulation of TCR expression at the cell surface. Indeed, constitutive TCR cycling is dependent on the di-leucine-based (diL) receptor-sorting motif present in CD3G. The sequence is that of T-cell surface glycoprotein CD3 gamma chain (CD3G) from Homo sapiens (Human).